The following is a 1117-amino-acid chain: Cytospin-A (1117 aa).

3 disordered regions span residues 1-176 (MKKA…NQIS), 293-323 (SLSP…GSVE), and 358-390 (SSDD…NASE). Residues 45–90 (TAASLSKTKSSDDLLAGMAGGVTVTNGVKGKKSTCPSAAPSASAPA) show a composition bias toward low complexity. Residues 93–117 (TVENKSKISTGTASSTKRNTSTGNK) show a composition bias toward polar residues. Basic and acidic residues-rich tracts occupy residues 120-131 (SSTRERLRERTR) and 158-171 (TATE…KSKS). Residues 168 to 280 (KSKSDNQISD…LNALGFSLEQ (113 aa)) adopt a coiled-coil conformation. Residues 293–303 (SLSPEITPGNQ) show a composition bias toward polar residues. Over residues 358-377 (SSDDALDAPSSSESEGIPSI) the composition is skewed to low complexity. 3 positions are modified to phosphoserine: Ser384, Ser385, and Ser389. Coiled coils occupy residues 394–449 (ACLT…MESL) and 487–807 (RYME…RGRV). Phosphoserine occurs at positions 868, 881, and 887. The tract at residues 919-1001 (RTSSASRPAS…SRIREERKDP (83 aa)) is disordered. A compositionally biased stretch (basic and acidic residues) spans 946–956 (RSSEEMKRDIS). Low complexity predominate over residues 971 to 990 (TTSPQLSLSSSPTASVTPTT). The 106-residue stretch at 1011–1116 (GSKRNALLKW…YVTAIYKYFE (106 aa)) folds into the Calponin-homology (CH) domain.

Belongs to the cytospin-A family. In terms of assembly, may interact with both microtubules and actin cytoskeleton.

It is found in the cytoplasm. The protein resides in the cytoskeleton. It localises to the spindle. Its subcellular location is the cell junction. The protein localises to the gap junction. Involved in cytokinesis and spindle organization. May play a role in actin cytoskeleton organization and microtubule stabilization and hence required for proper cell adhesion and migration. This is Cytospin-A (SPECC1L) from Pan troglodytes (Chimpanzee).